The sequence spans 545 residues: CTP synthase (545 aa).

The segment at 1-264 is amidoligase domain; the sequence is MQYIVVTGGV…ITRLSKLLNM (264 aa). CTP is bound at residue serine 12. Serine 12 contributes to the UTP binding site. An ATP-binding site is contributed by 13–18; sequence GLGKGT. An L-glutamine-binding site is contributed by tyrosine 53. Aspartate 70 contacts ATP. 2 residues coordinate Mg(2+): aspartate 70 and glutamate 140. Residues 147–149, 185–190, and arginine 221 contribute to the CTP site; these read DIE and KTKPTQ. UTP contacts are provided by residues 185–190 and arginine 221; that span reads KTKPTQ. In terms of domain architecture, Glutamine amidotransferase type-1 spans 294–527; the sequence is YVDLHDAYIS…VEQALIFKHR (234 aa). Residue glycine 347 coordinates L-glutamine. The active-site Nucleophile; for glutamine hydrolysis is the cysteine 374. Residues 375–378, glutamate 398, and arginine 455 contribute to the L-glutamine site; that span reads LGFQ. Catalysis depends on residues histidine 500 and glutamate 502.

The protein belongs to the CTP synthase family. Homotetramer.

It catalyses the reaction UTP + L-glutamine + ATP + H2O = CTP + L-glutamate + ADP + phosphate + 2 H(+). The catalysed reaction is L-glutamine + H2O = L-glutamate + NH4(+). The enzyme catalyses UTP + NH4(+) + ATP = CTP + ADP + phosphate + 2 H(+). The protein operates within pyrimidine metabolism; CTP biosynthesis via de novo pathway; CTP from UDP: step 2/2. Its activity is regulated as follows. Allosterically activated by GTP, when glutamine is the substrate; GTP has no effect on the reaction when ammonia is the substrate. The allosteric effector GTP functions by stabilizing the protein conformation that binds the tetrahedral intermediate(s) formed during glutamine hydrolysis. Inhibited by the product CTP, via allosteric rather than competitive inhibition. Functionally, catalyzes the ATP-dependent amination of UTP to CTP with either L-glutamine or ammonia as the source of nitrogen. Regulates intracellular CTP levels through interactions with the four ribonucleotide triphosphates. The sequence is that of CTP synthase from Thermoplasma acidophilum (strain ATCC 25905 / DSM 1728 / JCM 9062 / NBRC 15155 / AMRC-C165).